The sequence spans 393 residues: Putative competence-damage inducible protein (393 aa).

The protein belongs to the CinA family.

This is Putative competence-damage inducible protein from Streptococcus suis (strain 05ZYH33).